The chain runs to 301 residues: CRISPR-associated endonuclease Cas1 (301 aa).

E133, H200, and D213 together coordinate Mn(2+).

Belongs to the CRISPR-associated endonuclease Cas1 family. In terms of assembly, homodimer, forms a heterotetramer with a Cas2 homodimer. Mg(2+) is required as a cofactor. Mn(2+) serves as cofactor.

CRISPR (clustered regularly interspaced short palindromic repeat), is an adaptive immune system that provides protection against mobile genetic elements (viruses, transposable elements and conjugative plasmids). CRISPR clusters contain spacers, sequences complementary to antecedent mobile elements, and target invading nucleic acids. CRISPR clusters are transcribed and processed into CRISPR RNA (crRNA). Acts as a dsDNA endonuclease. Involved in the integration of spacer DNA into the CRISPR cassette. The sequence is that of CRISPR-associated endonuclease Cas1 from Clostridium sp. (strain SY8519).